The sequence spans 175 residues: NADH-ubiquinone oxidoreductase chain 6 (175 aa).

5 helical membrane passes run 1–21, 25–45, 47–67, 88–108, and 149–169; these read MMTY…VGFS, SPIY…GIIM, FGGS…MLVV, TVMG…LYVL, and YGAW…LVIL.

The protein belongs to the complex I subunit 6 family. Core subunit of respiratory chain NADH dehydrogenase (Complex I) which is composed of 45 different subunits.

It is found in the mitochondrion inner membrane. It carries out the reaction a ubiquinone + NADH + 5 H(+)(in) = a ubiquinol + NAD(+) + 4 H(+)(out). In terms of biological role, core subunit of the mitochondrial membrane respiratory chain NADH dehydrogenase (Complex I) which catalyzes electron transfer from NADH through the respiratory chain, using ubiquinone as an electron acceptor. Essential for the catalytic activity and assembly of complex I. This is NADH-ubiquinone oxidoreductase chain 6 (MT-ND6) from Equus asinus (Donkey).